The sequence spans 488 residues: Sucrose 6(F)-phosphate phosphorylase (488 aa).

Sucrose 6(F)-phosphate contacts are provided by residues Asp49, His87, 195–197 (RLD), Glu238, 295–296 (HD), 342–345 (DVHQ), and Arg399. Residue Asp197 is the Nucleophile of the active site. Glu238 (proton donor/acceptor) is an active-site residue.

The protein belongs to the glycosyl hydrolase 13 family. Sucrose phosphorylase subfamily. As to quaternary structure, monomer.

It catalyses the reaction sucrose 6(F)-phosphate + phosphate = beta-D-fructose 6-phosphate + alpha-D-glucose 1-phosphate. Functionally, catalyzes the reversible phosphorolysis of sucrose 6(F)-phosphate into alpha-D-glucose 1-phosphate (Glc1P) and D-fructose 6-phosphate. May be involved in a new pathway for the degradation of sucrose, which could become phosphorylated on its fructose moiety during uptake via a PTS system. To a lesser extent, can also reversibly act on sucrose in vitro. Is also able to catalyze transglycosylation reactions in vitro. The polypeptide is Sucrose 6(F)-phosphate phosphorylase (Thermoanaerobacterium thermosaccharolyticum (strain ATCC 7956 / DSM 571 / NCIMB 9385 / NCA 3814 / NCTC 13789 / WDCM 00135 / 2032) (Clostridium thermosaccharolyticum)).